The chain runs to 58 residues: uncharacterized protein (58 aa).

Its subcellular location is the mitochondrion. This is an uncharacterized protein from Saccharomyces cerevisiae (strain ATCC 204508 / S288c) (Baker's yeast).